Consider the following 1196-residue polypeptide: MGERAYHGAQVCSGTNPRKCQDLGDSILLLLGSFILLNVWINVVTLLWKHLKSSLRILFRHFFPKDKQPSGSHPICICSSVDPKNLCSKVSSRVHPRPGFLLRRVNHLDSWIPDTNDEKVSACCCVPPKCGHAGVPRESARGLYKAGMMGGGEAPQVTASKAQASLLSRPETSSQFPKMSKLDTGPCHLPQESKTKTPDCAPAEAPAQAQVHSPTHTPVCTPTHPWTRSTDHTAVHTPAHSWTHSKARTPEGTHSQAQDTSAQAQAHTSAPTPAQTPAHIQAHTPAPTPAKASAHTKAHTSAQAQTHSPPHTPEYTHSQAHSPEHTSAHSPAQAPMPVPAHPQAHAPEYTSAHAPAYIPDHSHLVRSSVPVPTSAPAPPGTLAPATTPVLAPTPAPVPASAPSPAPALVMALTTTPVPDPVPATTPAPIITPIPSTPPAFSHDLSTGHVVYDARREKQNFFHMSSPQNPEYSRKDLATLFRPQEGQDLVSSGISEQTKQCSGDSAKLPAGSILGYLELRNMEWKNSDDAKDKFPQTKTSPYCSFHPCSSEKNTDSQAPFYPKFLAYSRDTACAKTCFHSATTAQSSVCTLPPPFTLSLPLVPPRSFVPPQPTNHQRPSTLIQTPTVLPTSKSPQSILTSQFPIPSLFATISQPLIQPQCPECHESLGLTQDSGLQRTPGPSKDSRVPRNLDLAQNPDLYKNPGLTQDPGLHENPGLAPNQGLHEFPGLPQDSYLCQNPSPSQDFGLHKNSGITQDSHPQKNTGLTQEAGILRSPCLTQSPGLHKKTPFTQTSDLQRSSGFTQDSGIYRNLEPNQETVIYKNQDLSQATDHQKNLGSSKDSGGHKNTGNVQDPGVCSTAGLTEDSGSQKGPYVPQDSEVNKSSGVIQESFLHKSPGLVQTSGLPKCSGLTQNSGDYKNPGLIQDCGGHKVKGLTQDSNLPSLTQATKVERRFSLPQDVGVYRSSEHSQDSNLHKCPGINQDPGPHKDPALVQDSGLPKISGLTQESGPYKSSCLIPDPSLYKNPSPALGSDFVQLLSLLQTPKSTLSLMKSSVPEKAAQKEDAQRHVLWARVQLNENSCPSKAQVVSNDLQTFSEVPVLIELQSSSWRAGSQHGAYRPVDTVPSGYQNYRQMSMPTHINWKSHCPGPGTQAGHVVFDARQRRLAVGKDKCEALSPRRLHQEAPSNSGKPSRSGDIRM.

Residues 27-47 (ILLLLGSFILLNVWINVVTLL) form a helical membrane-spanning segment. 7 disordered regions span residues 150–345 (GGGE…PQAH), 367–402 (SSVP…ASAP), 669–762 (TQDS…QKNT), 775–806 (CLTQ…DSGI), 826–877 (QATD…QDSE), 960–1009 (YRSS…GPYK), and 1168–1196 (KCEA…DIRM). Polar residues predominate over residues 157 to 177 (VTASKAQASLLSRPETSSQFP). Low complexity-rich tracts occupy residues 212–227 (HSPT…HPWT) and 253–279 (THSQ…TPAH). Over residues 299–321 (HTSAQAQTHSPPHTPEYTHSQAH) the composition is skewed to polar residues. Residues 391–402 (APTPAPVPASAP) are compositionally biased toward pro residues. Polar residues-rich tracts occupy residues 733–742 (YLCQNPSPSQ), 750–762 (SGIT…QKNT), 787–804 (PFTQ…TQDS), and 826–849 (QATD…TGNV). The span at 962–971 (SSEHSQDSNL) shows a compositional bias: basic and acidic residues.

Its subcellular location is the membrane. This is an uncharacterized protein from Homo sapiens (Human).